A 600-amino-acid chain; its full sequence is UvrABC system protein C (600 aa).

The region spanning 15-100 is the GIY-YIG domain; sequence NSAGVYEYFN…IKQLHPKYNI (86 aa). Positions 203–238 constitute a UVR domain; sequence SVLLKNLEKQMLVLAQNENYEEAAKIRDQIATIKDL.

This sequence belongs to the UvrC family. As to quaternary structure, interacts with UvrB in an incision complex.

Its subcellular location is the cytoplasm. Its function is as follows. The UvrABC repair system catalyzes the recognition and processing of DNA lesions. UvrC both incises the 5' and 3' sides of the lesion. The N-terminal half is responsible for the 3' incision and the C-terminal half is responsible for the 5' incision. This chain is UvrABC system protein C, found in Campylobacter jejuni subsp. doylei (strain ATCC BAA-1458 / RM4099 / 269.97).